The following is a 296-amino-acid chain: Ribonuclease HIII (296 aa).

Residues 81-296 (QAMIGTDEVG…TQKAKQLLER (216 aa)) form the RNase H type-2 domain. A divalent metal cation is bound by residues D87, E88, and D190.

The protein belongs to the RNase HII family. RnhC subfamily. Mn(2+) serves as cofactor. The cofactor is Mg(2+).

It localises to the cytoplasm. The catalysed reaction is Endonucleolytic cleavage to 5'-phosphomonoester.. Functionally, endonuclease that specifically degrades the RNA of RNA-DNA hybrids. The protein is Ribonuclease HIII of Streptococcus gordonii (strain Challis / ATCC 35105 / BCRC 15272 / CH1 / DL1 / V288).